Reading from the N-terminus, the 302-residue chain is Probable alpha-L-glutamate ligase (302 aa).

An ATP-grasp domain is found at 105-288 (LQLLARKGIP…LAGKIIEYIE (184 aa)). ATP is bound by residues Lys-142, 179-180 (EF), Asp-188, and 212-214 (RAN). Residues Asp-249, Glu-261, and Asn-263 each coordinate Mg(2+). Residues Asp-249, Glu-261, and Asn-263 each contribute to the Mn(2+) site.

Belongs to the RimK family. It depends on Mg(2+) as a cofactor. Mn(2+) is required as a cofactor.

The chain is Probable alpha-L-glutamate ligase from Legionella pneumophila (strain Paris).